A 1134-amino-acid chain; its full sequence is MKPKHYPDTISSPDFSSLEKEIIKFWQENKIFEQSVEKRSKDNCFVFYDGPPFANGLPHYGHLLTGFIKDAFARYQTMLQKKVERRFGWDCHGLPAEMGAEKELGISGRTEIEKFGIEKFNNYCRTSVMKFSSEWEKYVNRQARWVDFHNDYKTMDRSFMESVIWAFKQLYDKGLVYESVRVVPYSWACETPLSNFETRLDTAYRKKTSKAVTVAFELLENPQQFKQKCKLLAWTTTPWTLPSNLALAIGKDIEYCAVSVHSSVSFQHVTLESREKETWIPLSRTGMTEEGTETVTEDNEVSLVNNEIYIFAEDYLEKFIGHCEQNNIPYENCNTKLKADDLAGLSYKPLFNYFKGTKNAFRVFIADYVTGEDGTGVVHTAPGFGEEDFYLCQSHDIPAICPIDNSGRFTAEVSDLTGIHVFDTNDAIIKKLKEQGNWFKTEQYIHNYPHCWRTDTPLIYRAMPSWYVAVTKFKERMIELNKRVNWIPTHIRDGQFGKWLERAHDWSISRNRFWGTPIPIWKSDNARYPRVDVYGSIAELERDFNVKVNDLHRPFIDSLTRPNPDDPTGKSIMRRVPDVFDCWFESGSVPFAQVHYPFENKEWFESNFPADFITEYIAQTRGWFYTLFVLSTALFDSEPFKNCICHGVVLDVKGQKLSKRLNNYADPMEVFDKYGSDALRFLMLSGSIVCGGNLFLNKEGSSIRDVLKNVMKPIWNSYHFFTMYANADGIKAEVCKDYKSTIDSYMIFKCFEAVESIQASMSNYNSQEACKILIDFFEVLNNWYIRRSRERFWKSNLDQDKTDAYNVLYTVFYYILRAAVPLLPLITETIWQGLKYKEISVHLADFPQLERYDSELIAKMDLVREICNSALSIRNTFNIRVRQPLGSMTVYHQSSCSFLESKPLSVVIPKFSPVIPMRDTGTQKEKKWSNAEMKTSMNEYQEMIKDEVNVKELKLVNSLEGIASLELKLNFPMLGKRIPDKVKKLVQYVKEGKWKQVDNEQVFLGNESESYIIEKDEYELLLKTNSEYSSVFGDNKGIVILNTALDDALVLEGLARDVVRLIQEARKQADFHISDRIRVIIKTEDEKIKRAINTWGEYIREQTLSLSLEINIEIGDNFYSKEYQDLIVGIELNC.

Positions 52 to 62 (PFANGLPHYGH) match the 'HIGH' region motif. Positions 656 to 660 (KLSKR) match the 'KMSKS' region motif. ATP is bound at residue Lys659.

It belongs to the class-I aminoacyl-tRNA synthetase family. IleS type 2 subfamily. As to quaternary structure, monomer. Requires Zn(2+) as cofactor.

Its subcellular location is the cytoplasm. The enzyme catalyses tRNA(Ile) + L-isoleucine + ATP = L-isoleucyl-tRNA(Ile) + AMP + diphosphate. In terms of biological role, catalyzes the attachment of isoleucine to tRNA(Ile). As IleRS can inadvertently accommodate and process structurally similar amino acids such as valine, to avoid such errors it has two additional distinct tRNA(Ile)-dependent editing activities. One activity is designated as 'pretransfer' editing and involves the hydrolysis of activated Val-AMP. The other activity is designated 'posttransfer' editing and involves deacylation of mischarged Val-tRNA(Ile). The sequence is that of Isoleucine--tRNA ligase from Wolbachia sp. subsp. Brugia malayi (strain TRS).